Reading from the N-terminus, the 551-residue chain is Arginine--tRNA ligase (551 aa).

A 'HIGH' region motif is present at residues 125–135; the sequence is ANPTGPLHIGH.

It belongs to the class-I aminoacyl-tRNA synthetase family. Monomer.

It is found in the cytoplasm. The catalysed reaction is tRNA(Arg) + L-arginine + ATP = L-arginyl-tRNA(Arg) + AMP + diphosphate. This Oleidesulfovibrio alaskensis (strain ATCC BAA-1058 / DSM 17464 / G20) (Desulfovibrio alaskensis) protein is Arginine--tRNA ligase.